The chain runs to 61 residues: Photosystem II assembly protein Psb34 (61 aa).

The helical transmembrane segment at 36-56 (LIMAAITVVLVAGLIAVAVVA) threads the bilayer.

It belongs to the Psb34 family. In terms of assembly, part of the photosystem II (PSII) assembly intermediate RC47 complex (with D1, D2, CP47, PsbE, PsbF, PsbH, Psb27 and Psb28); minor amounts are found in other PSII complexes, including mature, dimeric PSII with PsbO and PsbV. No HliA or HliB are detected in any of these complexes. Its interaction with PSII requires both CP47 (psbB) and PsbH. HliA/HliB and Psb34 probably bind to a similar site on CP47; their binding seems to be mutually exclusive.

It localises to the cellular thylakoid membrane. Its function is as follows. Involved in photosystem II (PSII) assembly and/or repair. Probably involved in conversion of late PSII assembly intermediates into mature dimeric PSII, it may mediate the optimal equlibrium of HliA/HliB among the intermediates containing CP47 (psbB) to facilitate photoprotection during assembly. The polypeptide is Photosystem II assembly protein Psb34 (Synechocystis sp. (strain ATCC 27184 / PCC 6803 / Kazusa)).